A 552-amino-acid chain; its full sequence is Membrane protein insertase YidC (552 aa).

5 helical membrane-spanning segments follow: residues 7–24 (VLWVIFFMSAVMLYDNWQ), 364–384 (WGWAIVLLTVLIKAVFFPLSA), 434–454 (LPVVIQIPVFISLYWVLLASV), 473–493 (PFFILPVLMAVSMFVQTSLNP), and 508–528 (PIAFSVMFFFFPAGLVLYYVV).

This sequence belongs to the OXA1/ALB3/YidC family. Type 1 subfamily. As to quaternary structure, interacts with the Sec translocase complex via SecD. Specifically interacts with transmembrane segments of nascent integral membrane proteins during membrane integration.

The protein resides in the cell inner membrane. Functionally, required for the insertion and/or proper folding and/or complex formation of integral membrane proteins into the membrane. Involved in integration of membrane proteins that insert both dependently and independently of the Sec translocase complex, as well as at least some lipoproteins. Aids folding of multispanning membrane proteins. In Burkholderia cenocepacia (strain ATCC BAA-245 / DSM 16553 / LMG 16656 / NCTC 13227 / J2315 / CF5610) (Burkholderia cepacia (strain J2315)), this protein is Membrane protein insertase YidC.